Consider the following 59-residue polypeptide: Conorfamide-Ep1 (59 aa).

The N-terminal stretch at 1-19 (MSGCGFLLLALLLLVTVEA) is a signal peptide. Positions 20 to 25 (TKMEKK) are excised as a propeptide. Isoleucine 43 bears the Isoleucine amide mark. Residues 45–59 (RRDMQSPLLSERLRF) constitute a propeptide that is removed on maturation.

Belongs to the FARP (FMRFamide related peptide) family. As to expression, expressed by the venom duct.

The protein localises to the secreted. Functionally, neurotoxin that is active on vertebrates. When tested at high doses (10 uM), the toxin affects all zebrafish and mouse DRG neurons in culture, which could be an indication of an effect on a widely expressed receptor or ion channel found in both species. At low doses (1 uM), the effects of the toxin are confined to a specific subpopulation of zebrafish and mouse DRG neurons. In vivo, it induces long-lasting dramatic alterations in the locomotor behavior of zebrafish larvae. It rapidly induces hypoactivity and death of larvae at high doses and it causes hyperactivity at lower doses. In zebrafish adults, intramuscular injection causes the decrease of the movements and visited spaces. In mice, intracranial injection causes lethargy and prolonges sleeping phases and reduced movement. This is Conorfamide-Ep1 from Conus episcopatus (Bishop's cone).